The sequence spans 236 residues: uncharacterized protein (236 aa).

In terms of domain architecture, HTH gntR-type spans 7-74 (RTNRRDIYLK…PKIGSFVSRV (68 aa)). The H-T-H motif DNA-binding region spans 34-53 (ENELAASMGVSRTPVRESLI).

This is an uncharacterized protein from Streptomyces ambofaciens.